A 29-amino-acid polypeptide reads, in one-letter code: Cytochrome b6-f complex subunit 8 (29 aa).

The helical transmembrane segment at 3–23 threads the bilayer; it reads ILSLGWAALMTMFTFSLALTV.

The protein belongs to the PetN family. The 4 large subunits of the cytochrome b6-f complex are cytochrome b6, subunit IV (17 kDa polypeptide, PetD), cytochrome f and the Rieske protein, while the 4 small subunits are PetG, PetL, PetM and PetN. The complex functions as a dimer.

The protein resides in the plastid. It is found in the chloroplast thylakoid membrane. In terms of biological role, component of the cytochrome b6-f complex, which mediates electron transfer between photosystem II (PSII) and photosystem I (PSI), cyclic electron flow around PSI, and state transitions. This is Cytochrome b6-f complex subunit 8 from Phaeodactylum tricornutum (strain CCAP 1055/1).